Consider the following 73-residue polypeptide: Antimicrobial peptide lumbricin-PG (73 aa).

A signal peptide spans 1-14 (MLLTISDFLFLSLT). Residues 25 to 48 (RPWSDRKNNYSGPQFTYPPEKAPP) form a disordered region.

The protein localises to the secreted. Displays antimicrobial activity against the Gram-positive bacterium S.aureus ATCC 2592, the Gram-negative bacteria E.coli ATCC 25922 and P.aeruginosa ATCC 27853, and the fungus C.albicans ATCC 2002. Displays stronger activity against P.aeruginosa and S.aureus than E.coli. Displays very weak hemolytic activity. In Metaphire guillelmi (Earthworm), this protein is Antimicrobial peptide lumbricin-PG.